A 206-amino-acid chain; its full sequence is Small ribosomal subunit protein uS4 (206 aa).

The 64-residue stretch at 94-157 (RRLDNVVYRL…RSRTYFKNLV (64 aa)) folds into the S4 RNA-binding domain.

It belongs to the universal ribosomal protein uS4 family. Part of the 30S ribosomal subunit. Contacts protein S5. The interaction surface between S4 and S5 is involved in control of translational fidelity.

Its function is as follows. One of the primary rRNA binding proteins, it binds directly to 16S rRNA where it nucleates assembly of the body of the 30S subunit. Functionally, with S5 and S12 plays an important role in translational accuracy. This Chloroflexus aurantiacus (strain ATCC 29364 / DSM 637 / Y-400-fl) protein is Small ribosomal subunit protein uS4.